The chain runs to 91 residues: Acylphosphatase (91 aa).

In terms of domain architecture, Acylphosphatase-like spans 3 to 91 (CLRAIVKGKV…ANYSDFRIKH (89 aa)). Residues arginine 18 and asparagine 36 contribute to the active site.

The protein belongs to the acylphosphatase family.

The enzyme catalyses an acyl phosphate + H2O = a carboxylate + phosphate + H(+). In Dehalococcoides mccartyi (strain ATCC BAA-2100 / JCM 16839 / KCTC 5957 / BAV1), this protein is Acylphosphatase (acyP).